The primary structure comprises 259 residues: S-methyl-5'-thioadenosine phosphorylase (259 aa).

Phosphate is bound by residues S9 and 50–51; that span reads RH. A substrate-binding site is contributed by M175. T176 contributes to the phosphate binding site. A substrate-binding site is contributed by 199–201; sequence DLD.

This sequence belongs to the PNP/MTAP phosphorylase family. MTAP subfamily. In terms of assembly, homohexamer. Dimer of a homotrimer.

The catalysed reaction is S-methyl-5'-thioadenosine + phosphate = 5-(methylsulfanyl)-alpha-D-ribose 1-phosphate + adenine. It participates in amino-acid biosynthesis; L-methionine biosynthesis via salvage pathway; S-methyl-5-thio-alpha-D-ribose 1-phosphate from S-methyl-5'-thioadenosine (phosphorylase route): step 1/1. Catalyzes the reversible phosphorylation of S-methyl-5'-thioadenosine (MTA) to adenine and 5-methylthioribose-1-phosphate. Involved in the breakdown of MTA, a major by-product of polyamine biosynthesis. Responsible for the first step in the methionine salvage pathway after MTA has been generated from S-adenosylmethionine. Has broad substrate specificity with 6-aminopurine nucleosides as preferred substrates. The sequence is that of S-methyl-5'-thioadenosine phosphorylase from Mycolicibacterium smegmatis (strain ATCC 700084 / mc(2)155) (Mycobacterium smegmatis).